The following is a 728-amino-acid chain: Catalase-peroxidase (728 aa).

A disordered region spans residues 1-26 (MDNPTDTAGKCPVAHGNKPRGPSNRD). Residues 96-218 (WHSAGTYRIT…LGAVQMGLIY (123 aa)) constitute a cross-link (tryptophyl-tyrosyl-methioninium (Trp-Tyr) (with M-244)). Histidine 97 (proton acceptor) is an active-site residue. The tryptophyl-tyrosyl-methioninium (Tyr-Met) (with W-96) cross-link spans 218–244 (YVNPEGPGGNPDPLASARDIRETFARM). Heme b is bound at residue histidine 259.

This sequence belongs to the peroxidase family. Peroxidase/catalase subfamily. In terms of assembly, homodimer or homotetramer. Requires heme b as cofactor. Post-translationally, formation of the three residue Trp-Tyr-Met cross-link is important for the catalase, but not the peroxidase activity of the enzyme.

The catalysed reaction is H2O2 + AH2 = A + 2 H2O. It carries out the reaction 2 H2O2 = O2 + 2 H2O. Bifunctional enzyme with both catalase and broad-spectrum peroxidase activity. The chain is Catalase-peroxidase from Rhizobium etli (strain CIAT 652).